The chain runs to 55 residues: Large ribosomal subunit protein bL33 (55 aa).

This sequence belongs to the bacterial ribosomal protein bL33 family.

In Aliivibrio fischeri (strain ATCC 700601 / ES114) (Vibrio fischeri), this protein is Large ribosomal subunit protein bL33.